A 411-amino-acid chain; its full sequence is S-inosyl-L-homocysteine hydrolase (411 aa).

The substrate site is built by Asp121 and Glu146. 147–149 (TTT) provides a ligand contact to NAD(+). Substrate contacts are provided by Lys176 and Asp180. NAD(+) is bound by residues Asn181, 210–215 (GYGWCG), Glu233, Asn268, 289–291 (SGH), and Asn335.

Belongs to the adenosylhomocysteinase family. Requires NAD(+) as cofactor.

Its subcellular location is the cytoplasm. The enzyme catalyses S-inosyl-L-homocysteine + H2O = L-homocysteine + inosine. It functions in the pathway amino-acid biosynthesis; S-adenosyl-L-methionine biosynthesis. In terms of biological role, catalyzes the hydrolysis of S-inosyl-L-homocysteine (SIH) to L-homocysteine (Hcy) and inosine. Likely functions in a S-adenosyl-L-methionine (SAM) recycling pathway from S-adenosyl-L-homocysteine (SAH) produced from SAM-dependent methylation reactions. Can also catalyze the reverse reaction in vitro, i.e. the synthesis of SIH from Hcy and inosine. In Methanosarcina acetivorans (strain ATCC 35395 / DSM 2834 / JCM 12185 / C2A), this protein is S-inosyl-L-homocysteine hydrolase.